The chain runs to 524 residues: 3-epi-6-deoxocathasterone 23-monooxygenase CYP90C1 (524 aa).

A helical transmembrane segment spans residues 25–45; the sequence is YLVAGFLVLTAGILLRPWLWL. Heme is bound at residue Cys-463.

This sequence belongs to the cytochrome P450 family. Heme is required as a cofactor. In terms of tissue distribution, widely expressed.

It is found in the endoplasmic reticulum membrane. It catalyses the reaction 3-epi-6-deoxocathasterone + reduced [NADPH--hemoprotein reductase] + O2 = 6-deoxotyphasterol + oxidized [NADPH--hemoprotein reductase] + H2O + H(+). It carries out the reaction (22S,24R)-22-hydroxy-5alpha-ergostan-3-one + reduced [NADPH--hemoprotein reductase] + O2 = 3-dehydro-6-deoxoteasterone + oxidized [NADPH--hemoprotein reductase] + H2O + H(+). Its pathway is plant hormone biosynthesis; brassinosteroid biosynthesis. Involved in brassinosteroid (BR) biosynthesis. Converts typhasterol (TY) to cathasterone (CS) and 6-deoxotyphasterol (6-deoxoTY) to 6-deoxocathasterone (6-deoxoCT). C-23 hydroxylase that converts directly (22S,24R)-22-hydroxy-5-alpha-ergostan-3-one and 3-epi-6-deoxocathasterone to 3-dehydro-6-deoxoteasterone (6-deoxo3DT, 6-deoxo3DHT) and 6-deoxotyphasterol (6-deoxoTY), respectively. These C-23 hydroxylation shortcuts bypass campestanol, 6-deoxocathasterone, and 6-deoxoteasterone (6-deoxoTE). Also catalyzes the conversion of cathasterone to teasterone (TE), (22S,24R)-22-hydroxyergost-4-en-3-one (22-OH-4-en-3-one) to (22R,23R)-22,23-dihydroxy-campest-4-en-3-one (22,23-diOH-4-en-3-one) and (22S)-22-hydroxycampesterol (22-OHCR) to (22R,23R)-22,23-dihydroxycampesterol (22,23-diOHCR). Required for the regulation of polar elongation of leaf cells. Required for the longitudinal elongation of floral organs. In Arabidopsis thaliana (Mouse-ear cress), this protein is 3-epi-6-deoxocathasterone 23-monooxygenase CYP90C1.